A 240-amino-acid polypeptide reads, in one-letter code: Protein OXIDATIVE STRESS 3 LIKE 4 (240 aa).

The interval 1–128 (MELMAKPTFS…SKSFGNLGEI (128 aa)) is disordered. The span at 51–66 (WSGQTADYSSDSSSIG) shows a compositional bias: polar residues. Positions 70 to 84 (DSEEDEEESENENDD) are enriched in acidic residues. A Nuclear localization signal motif is present at residues 142–150 (NKRRRLQIC). Residues 163-207 (NPKSMPLLPVNEDEDDDDEDDDEEDLKSGFDENKSSSDEEGVKKV) form a disordered region. The span at 173–187 (NEDEDDDDEDDDEED) shows a compositional bias: acidic residues. Positions 188-205 (LKSGFDENKSSSDEEGVK) are enriched in basic and acidic residues. Residues 202–229 (EGVKKVVVRKGSFKNRAYKSRSCFALSD) form a kinase-inducible domain (KID) region. Serine 213 is modified (phosphoserine).

As to quaternary structure, interacts with HDA19; Ser-213 is critical for this interaction.

It is found in the nucleus. In terms of biological role, transcription activator which may regulates gene expression through interaction with the histone deacetylase HDA19. Promotes slightly the tolerance to cadmium (Cd) and to oxidizing chemicals (e.g. diamide and tert-butyl hydroperoxide (t-BOOH)). This chain is Protein OXIDATIVE STRESS 3 LIKE 4, found in Arabidopsis thaliana (Mouse-ear cress).